A 481-amino-acid chain; its full sequence is Aspartyl/glutamyl-tRNA(Asn/Gln) amidotransferase subunit B (481 aa).

It belongs to the GatB/GatE family. GatB subfamily. Heterotrimer of A, B and C subunits.

It catalyses the reaction L-glutamyl-tRNA(Gln) + L-glutamine + ATP + H2O = L-glutaminyl-tRNA(Gln) + L-glutamate + ADP + phosphate + H(+). It carries out the reaction L-aspartyl-tRNA(Asn) + L-glutamine + ATP + H2O = L-asparaginyl-tRNA(Asn) + L-glutamate + ADP + phosphate + 2 H(+). In terms of biological role, allows the formation of correctly charged Asn-tRNA(Asn) or Gln-tRNA(Gln) through the transamidation of misacylated Asp-tRNA(Asn) or Glu-tRNA(Gln) in organisms which lack either or both of asparaginyl-tRNA or glutaminyl-tRNA synthetases. The reaction takes place in the presence of glutamine and ATP through an activated phospho-Asp-tRNA(Asn) or phospho-Glu-tRNA(Gln). This Pseudomonas savastanoi pv. phaseolicola (strain 1448A / Race 6) (Pseudomonas syringae pv. phaseolicola (strain 1448A / Race 6)) protein is Aspartyl/glutamyl-tRNA(Asn/Gln) amidotransferase subunit B.